A 92-amino-acid polypeptide reads, in one-letter code: Small ribosomal subunit protein uS19c (92 aa).

It belongs to the universal ribosomal protein uS19 family.

Its subcellular location is the plastid. It is found in the chloroplast. Protein S19 forms a complex with S13 that binds strongly to the 16S ribosomal RNA. The sequence is that of Small ribosomal subunit protein uS19c from Chloranthus spicatus (Chulantree).